A 341-amino-acid polypeptide reads, in one-letter code: Putative ankyrin repeat protein FPV031 (341 aa).

5 ANK repeats span residues 23 to 55 (DRNSLLLVATKRNYIDVVRYLVKKGVDINFQET), 58 to 87 (DNLTPLMIASRFNSHQLVELLLNNGAIINQ), 92 to 124 (CGNTALHLAVKNDNRITVDILLFHGANTNITNN), 125 to 158 (DGFTPLHKAVIYNASIDIIKKLLRYKADVNIRDN), and 163 to 195 (TGLTPLDIAMSCNNYEIISLLVSHVIRLDYSTC).

This Fowlpox virus (strain NVSL) (FPV) protein is Putative ankyrin repeat protein FPV031 (ANK3).